The sequence spans 320 residues: Malate dehydrogenase (320 aa).

NAD(+)-binding positions include 10–15 and Asp-34; that span reads GSGMIG. Residues Arg-83 and Arg-89 each coordinate substrate. Residues Asn-96 and 119-121 each bind NAD(+); that span reads ITN. Asn-121 and Arg-152 together coordinate substrate. Catalysis depends on His-176, which acts as the Proton acceptor.

It belongs to the LDH/MDH superfamily. MDH type 3 family.

The enzyme catalyses (S)-malate + NAD(+) = oxaloacetate + NADH + H(+). Catalyzes the reversible oxidation of malate to oxaloacetate. This Brucella canis (strain ATCC 23365 / NCTC 10854 / RM-666) protein is Malate dehydrogenase.